Here is a 606-residue protein sequence, read N- to C-terminus: Putative auxin response factor 21 (606 aa).

Residues 126 to 228 constitute a DNA-binding region (TF-B3); the sequence is FTKVLTASDT…ELRVGIRRAR (103 aa). In terms of domain architecture, PB1 spans 511–592; that stretch reads RTCTKVQMQG…MVKKILIYSK (82 aa).

Belongs to the ARF family. In terms of assembly, homodimers and heterodimers.

Its subcellular location is the nucleus. Functionally, auxin response factors (ARFs) are transcriptional factors that bind specifically to the DNA sequence 5'-TGTCTC-3' found in the auxin-responsive promoter elements (AuxREs). Could act as transcriptional activator or repressor. Formation of heterodimers with Aux/IAA proteins may alter their ability to modulate early auxin response genes expression. The polypeptide is Putative auxin response factor 21 (ARF21) (Arabidopsis thaliana (Mouse-ear cress)).